We begin with the raw amino-acid sequence, 346 residues long: Sensor protein kinase GraS (346 aa).

The next 2 membrane-spanning stretches (helical) occupy residues 15–35 (MNWIFWILFLNLLMLGISLID) and 43–63 (LFYIVSLNLSLTMIFLILTYF). Positions 126-332 (EFVHDIKTPV…TVRLIFPLQN (207 aa)) constitute a Histidine kinase domain.

As to quaternary structure, interacts with GraX.

Its subcellular location is the cell membrane. It carries out the reaction ATP + protein L-histidine = ADP + protein N-phospho-L-histidine.. Member of the two-component regulatory system GraR/GraS involved in resistance against cationic antimicrobial peptides (CAMPs). Functions as a sensor protein kinase which phosphorylates GraR through the auxiliary protein GraX. In turn, GraR up-regulates many genes such as adhesins, exoproteins, transporters, toxins, and proteins involved in cell wall synthesis. Down-regulates the expression of many genes involved in RNA and amino acid synthesis or glycolysis. The chain is Sensor protein kinase GraS (graS) from Staphylococcus aureus (strain MSSA476).